The chain runs to 74 residues: UPF0346 protein SE_1114 (74 aa).

The protein belongs to the UPF0346 family.

This Staphylococcus epidermidis (strain ATCC 12228 / FDA PCI 1200) protein is UPF0346 protein SE_1114.